The sequence spans 653 residues: Fructose-1,6-bisphosphatase class 3 (653 aa).

Belongs to the FBPase class 3 family. Mn(2+) serves as cofactor.

The catalysed reaction is beta-D-fructose 1,6-bisphosphate + H2O = beta-D-fructose 6-phosphate + phosphate. It participates in carbohydrate biosynthesis; gluconeogenesis. This is Fructose-1,6-bisphosphatase class 3 from Listeria monocytogenes serovar 1/2a (strain ATCC BAA-679 / EGD-e).